The sequence spans 77 residues: UPF0291 protein BLi02035/BL02933 (77 aa).

The segment at 57–77 (PEGNDVTPEKLKQEKRNRRLH) is disordered.

It belongs to the UPF0291 family.

Its subcellular location is the cytoplasm. The chain is UPF0291 protein BLi02035/BL02933 from Bacillus licheniformis (strain ATCC 14580 / DSM 13 / JCM 2505 / CCUG 7422 / NBRC 12200 / NCIMB 9375 / NCTC 10341 / NRRL NRS-1264 / Gibson 46).